Here is an 806-residue protein sequence, read N- to C-terminus: NADH-quinone oxidoreductase subunit G (806 aa).

Residues 15 to 93 enclose the 2Fe-2S ferredoxin-type domain; the sequence is EMVTLTIDGV…DMVVRTQLTS (79 aa). The [2Fe-2S] cluster site is built by C49, C60, C63, and C77. The 4Fe-4S His(Cys)3-ligated-type domain maps to 95 to 134; that stretch reads IADKAQHGVMELLLINHPLDCPMCDKGGECPLQNQAMSNG. Positions 111, 115, 118, 124, 164, 167, 170, 214, 240, 243, 247, and 275 each coordinate [4Fe-4S] cluster. One can recognise a 4Fe-4S Mo/W bis-MGD-type domain in the interval 233-289; that stretch reads LVSSPSVCEHCASGCAQRTDHRRGKVLRRLAGDDPEVNEEWNCDKGRWAFTYATQPD.

This sequence belongs to the complex I 75 kDa subunit family. The cofactor is [2Fe-2S] cluster. Requires [4Fe-4S] cluster as cofactor.

It catalyses the reaction a quinone + NADH + 5 H(+)(in) = a quinol + NAD(+) + 4 H(+)(out). NDH-1 shuttles electrons from NADH, via FMN and iron-sulfur (Fe-S) centers, to quinones in the respiratory chain. The immediate electron acceptor for the enzyme in this species is believed to be menaquinone. Couples the redox reaction to proton translocation (for every two electrons transferred, four hydrogen ions are translocated across the cytoplasmic membrane), and thus conserves the redox energy in a proton gradient. The protein is NADH-quinone oxidoreductase subunit G (nuoG) of Mycobacterium bovis (strain ATCC BAA-935 / AF2122/97).